The primary structure comprises 527 residues: Peptide chain release factor 3 (527 aa).

The region spanning asparagine 9–glutamine 278 is the tr-type G domain. GTP is bound by residues serine 18–threonine 25, aspartate 86–histidine 90, and asparagine 140–aspartate 143.

This sequence belongs to the TRAFAC class translation factor GTPase superfamily. Classic translation factor GTPase family. PrfC subfamily.

It localises to the cytoplasm. Its function is as follows. Increases the formation of ribosomal termination complexes and stimulates activities of RF-1 and RF-2. It binds guanine nucleotides and has strong preference for UGA stop codons. It may interact directly with the ribosome. The stimulation of RF-1 and RF-2 is significantly reduced by GTP and GDP, but not by GMP. The chain is Peptide chain release factor 3 from Haemophilus influenzae (strain 86-028NP).